The primary structure comprises 213 residues: Protein-L-isoaspartate O-methyltransferase (213 aa).

The active site involves serine 64.

This sequence belongs to the methyltransferase superfamily. L-isoaspartyl/D-aspartyl protein methyltransferase family.

It is found in the cytoplasm. It carries out the reaction [protein]-L-isoaspartate + S-adenosyl-L-methionine = [protein]-L-isoaspartate alpha-methyl ester + S-adenosyl-L-homocysteine. Catalyzes the methyl esterification of L-isoaspartyl residues in peptides and proteins that result from spontaneous decomposition of normal L-aspartyl and L-asparaginyl residues. It plays a role in the repair and/or degradation of damaged proteins. This chain is Protein-L-isoaspartate O-methyltransferase, found in Flavobacterium psychrophilum (strain ATCC 49511 / DSM 21280 / CIP 103535 / JIP02/86).